A 482-amino-acid polypeptide reads, in one-letter code: Pyruvate kinase (482 aa).

R37 provides a ligand contact to substrate. K(+)-binding residues include N39, S41, and D71. Residue 39-42 coordinates ATP; the sequence is NFSH. Residues R78 and K160 each coordinate ATP. A Mg(2+)-binding site is contributed by E222. Positions 245, 246, and 278 each coordinate substrate. D246 is a binding site for Mg(2+).

The protein belongs to the pyruvate kinase family. Homotetramer. Mg(2+) serves as cofactor. Requires K(+) as cofactor.

The catalysed reaction is pyruvate + ATP = phosphoenolpyruvate + ADP + H(+). It participates in carbohydrate degradation; glycolysis; pyruvate from D-glyceraldehyde 3-phosphate: step 5/5. In Agrobacterium vitis (Rhizobium vitis), this protein is Pyruvate kinase (ttuE).